The sequence spans 412 residues: Probable histone-binding protein rba-1 (412 aa).

WD repeat units lie at residues 117 to 157 (NHPG…SEPK), 169 to 209 (GHEG…TISG), 219 to 259 (GHSS…PQLT), 262 to 302 (GHTA…KKMY), 306 to 346 (HHND…DPSS), and 365 to 405 (GHTG…VSSE).

The protein belongs to the WD repeat RBAP46/RBAP48/MSI1 family. In terms of assembly, binds directly to helix 1 of the histone fold of histone H4, a region that is not accessible when H4 is in chromatin. Interacts with zft-11; the interaction is required to suppress the activation of non-neuronal genes in neurons.

It localises to the nucleus. Functionally, core histone-binding subunit that may target chromatin assembly factors, chromatin remodeling factors and histone deacetylases to their histone substrates in a manner that is regulated by nucleosomal DNA. Plays a role in regulating cell cycle progression. Required to repress the induction of vulval development by Ras signaling. In association with the zinc finger protein ztf-11, negatively regulates the expression of non-neuronal genes during neurogenesis. The polypeptide is Probable histone-binding protein rba-1 (Caenorhabditis elegans).